The following is a 210-amino-acid chain: MNRRELLIAGLSFPFLKFAFAENKFINPKTVNPRLNVAYATAKLLAKNGFNEVGVVFMEDSQLCAVFAGALVTGLRILGKKAWYIEGGKDLIPSLKKYNPKALYMAYFGELPDEQVQEALNNDLKQLAKYGKPFKLIFHVSTLQRGYVGNAILEEDIFNYLNKVKELYAMKVIEGYVHLAKVSELSEFGVSFGKDVDKIKLIKFEEVGKK.

This is an uncharacterized protein from Aquifex aeolicus (strain VF5).